Here is a 504-residue protein sequence, read N- to C-terminus: Signal recognition particle receptor FtsY (504 aa).

Disordered stretches follow at residues 1–71 (MFNW…DDYL) and 116–135 (ESDQ…TEIT). GTP contacts are provided by residues 308–315 (GVNGAGKT), 391–395 (DTAGR), and 455–458 (TKLD).

It belongs to the GTP-binding SRP family. FtsY subfamily. In terms of assembly, part of the signal recognition particle protein translocation system, which is composed of SRP and FtsY.

The protein resides in the cell inner membrane. It is found in the cytoplasm. The enzyme catalyses GTP + H2O = GDP + phosphate + H(+). Functionally, involved in targeting and insertion of nascent membrane proteins into the cytoplasmic membrane. Acts as a receptor for the complex formed by the signal recognition particle (SRP) and the ribosome-nascent chain (RNC). The sequence is that of Signal recognition particle receptor FtsY from Synechocystis sp. (strain ATCC 27184 / PCC 6803 / Kazusa).